The chain runs to 328 residues: Acyl-CoA wax alcohol acyltransferase 1 (328 aa).

2 helical membrane passes run 12–32 (SLSLLQWPLSYVAMFWIVQPL) and 34–53 (ICLLFTPLWPLPTVYFVWLL).

This sequence belongs to the diacylglycerol acyltransferase family.

The protein resides in the endoplasmic reticulum membrane. It catalyses the reaction a long chain fatty alcohol + a fatty acyl-CoA = a wax ester + CoA. It carries out the reaction 1,2-di-(9Z-octadecenoyl)-sn-glycerol + (9Z)-octadecenoyl-CoA = 1,2,3-tri-(9Z-octadecenoyl)-glycerol + CoA. The enzyme catalyses hexadecan-1-ol + (9Z)-octadecenoyl-CoA = hexadecanyl (9Z)-octadecenoate + CoA. The catalysed reaction is decan-1-ol + (9Z)-octadecenoyl-CoA = 1-O-decyl-(9Z)-octadecenoate + CoA. It catalyses the reaction (9Z)-hexadecen-1-ol + (9Z)-octadecenoyl-CoA = 1-O-(9Z)-hexadecenyl (9Z)-octadecenoate + CoA. It carries out the reaction octadecan-1-ol + (9Z)-octadecenoyl-CoA = 1-O-octadecyl (9Z)-octadecenoate + CoA. The enzyme catalyses (9Z)-octadecen-1-ol + (9Z)-octadecenoyl-CoA = 1-O-(9Z)-octadecenyl (9Z)-octadecenoate + CoA. The catalysed reaction is hexadecan-1-ol + hexadecanoyl-CoA = hexadecanyl hexadecanoate + CoA. It catalyses the reaction hexadecan-1-ol + (9Z)-hexadecenoyl-CoA = 1-O-hexadecyl (9Z)-hexadecenoate + CoA. It carries out the reaction hexadecan-1-ol + octadecanoyl-CoA = hexadecanyl octadecanoate + CoA. The enzyme catalyses eicosan-1-ol + (9Z)-octadecenoyl-CoA = 1-O-eicosanyl (9Z)-octadecenoate + CoA. Its function is as follows. Acyltransferase that catalyzes the formation of ester bonds between fatty alcohols and fatty acyl-CoAs to form wax monoesters. Shows a strong preference for decyl alcohol (C10), with less activity towards C16 and C18 alcohols. Shows a strong preference for saturated acyl-CoAs. The polypeptide is Acyl-CoA wax alcohol acyltransferase 1 (Awat1) (Mus musculus (Mouse)).